The primary structure comprises 482 residues: Arginine/ornithine antiporter (482 aa).

Topologically, residues 1-10 (MSQESSQKLR) are cytoplasmic. A helical membrane pass occupies residues 11–31 (LGALTALVVGSMIGGGIFSLP). The Periplasmic portion of the chain corresponds to 32-40 (QNMAASADV). The helical transmembrane segment at 41–61 (GAVLIGWAITAVGMLTLAFVF) threads the bilayer. The Cytoplasmic segment spans residues 62–100 (QTLANRKPELDGGVYAYAKAGFGDYMGFSSAWGYWISAW). The helical transmembrane segment at 101-121 (LGNVGYFVLLFSTLGYFFPIF) threads the bilayer. Over 122-124 (GKG) the chain is Periplasmic. Residues 125–145 (DTVAAIVCASVLLWALHFLVL) form a helical membrane-spanning segment. The Cytoplasmic portion of the chain corresponds to 146–156 (RGIKEAAFINT). Residues 157–177 (VTTVAKVVPLFLFILICLFAF) traverse the membrane as a helical segment. The Periplasmic portion of the chain corresponds to 178–202 (KLDIFTADIWGKSNPDLGSVMNQVR). A helical membrane pass occupies residues 203-223 (NMMLVTVWVFIGIEGASIFSS). The Cytoplasmic portion of the chain corresponds to 224-235 (RAEKRSDVGKAT). A helical membrane pass occupies residues 236 to 256 (VIGFITVLLLLVLVNVLSMGV). Topologically, residues 257 to 283 (MTQPELAKLQNPSMALVLEHVVGHWGA) are periplasmic. A helical transmembrane segment spans residues 284 to 304 (VLISVGLLISLLGALLSWVLL). At 305–333 (CAEIMFAAAKDHTMPEFLRRENANQVPAN) the chain is on the cytoplasmic side. The helical transmembrane segment at 334 to 354 (ALWLTNICVQVFLVVVFFTSG) threads the bilayer. The Periplasmic segment spans residues 355–365 (DPDGMDPYTKM). The chain crosses the membrane as a helical span at residues 366–386 (LLLATSMILIPYFWSAAYGLL). At 387 to 403 (LTLKGETYENDARERSK) the chain is on the cytoplasmic side. Residues 404–424 (DLVIAGIAVAYAVWLLYAGGL) form a helical membrane-spanning segment. Residue Lys425 is a topological domain, periplasmic. Residues 426–446 (YLLLSALLYAPGAILFAKAKH) form a helical membrane-spanning segment. Over 447 to 458 (EVGQPIFTGIEK) the chain is Cytoplasmic. A helical membrane pass occupies residues 459–479 (LIFAAVVIGALVAAYGLYDGF). Topologically, residues 480-482 (LTL) are periplasmic.

Belongs to the amino acid-polyamine-organocation (APC) superfamily. Basic amino acid/polyamine antiporter (APA) (TC 2.A.3.2) family.

It localises to the cell inner membrane. The catalysed reaction is L-ornithine(in) + L-arginine(out) = L-ornithine(out) + L-arginine(in). Catalyzes electroneutral exchange between arginine and ornithine to allow high-efficiency energy conversion in the arginine deiminase pathway. Also mediates the proton motive force-driven uptake of arginine and ornithine, but the exchange is several orders of magnitude faster than the proton motive force-driven transport. The chain is Arginine/ornithine antiporter from Pseudomonas aeruginosa (strain ATCC 15692 / DSM 22644 / CIP 104116 / JCM 14847 / LMG 12228 / 1C / PRS 101 / PAO1).